A 279-amino-acid polypeptide reads, in one-letter code: MRNGSVLFGLFFIGHSCSVLLAAPTRASNNFDVESTHAEQWDSNGKRTLQADDSERTLAEERSMTQALLPAAEAFGKTKLPETTVPRASLGSKLNPMTWLKRIWYKLRLWNARFRLAKLKVRTSGENSIDRATLEGLTPLYLKKLKNEIFRYSSSVPRDKVQIEDEYDTFVTKYFRHFDGLFKEKPVTKMGKWDKLVRAMTRTGQLAMRAMLRKVGRTVDKGYSNEKLISLDVSPLLYMRLLVKRGVFTDVEHNKAKIDRLKNYVKAYKEHVMVSQPGG.

A signal peptide spans 1 to 22; the sequence is MRNGSVLFGLFFIGHSCSVLLA. The RxLR-dEER signature appears at 47 to 62; it reads RTLQADDSERTLAEER.

It belongs to the RxLR effector family.

Its subcellular location is the secreted. The protein resides in the host nucleus. In terms of biological role, secreted effector that completely suppresses the host cell death induced by cell death-inducing proteins. The chain is Secreted RxLR effector protein 152 from Plasmopara viticola (Downy mildew of grapevine).